The sequence spans 176 residues: Small ribosomal subunit protein uS4 (176 aa).

The region spanning 104 to 166 is the S4 RNA-binding domain; the sequence is RRLQTIVYKK…PTSPFKQNPP (63 aa).

The protein belongs to the universal ribosomal protein uS4 family. Part of the 30S ribosomal subunit. Contacts protein S5. The interaction surface between S4 and S5 is involved in control of translational fidelity.

Functionally, one of the primary rRNA binding proteins, it binds directly to 16S rRNA where it nucleates assembly of the body of the 30S subunit. In terms of biological role, with S5 and S12 plays an important role in translational accuracy. This chain is Small ribosomal subunit protein uS4 (rps4), found in Sulfolobus acidocaldarius (strain ATCC 33909 / DSM 639 / JCM 8929 / NBRC 15157 / NCIMB 11770).